A 264-amino-acid chain; its full sequence is Type II iodothyronine deiodinase (264 aa).

Residues 1–7 are Lumenal-facing; it reads MGLLSVD. A helical; Signal-anchor for type III membrane protein transmembrane segment spans residues 8–28; the sequence is LLITLQILPGFFSNCLFLALY. Over 29 to 264 the chain is Cytoplasmic; sequence DSVVLVKHVL…AESGQTGTEK (236 aa). U124 is a catalytic residue. Residue U124 is a non-standard amino acid, selenocysteine.

This sequence belongs to the iodothyronine deiodinase family. In terms of assembly, predominantly monomer. Can form homodimers but homodimerization is not essential for enzyme activity. As to expression, high levels seen in the metamorphosing tail.

The protein localises to the endoplasmic reticulum membrane. It carries out the reaction 3,3',5-triiodo-L-thyronine + iodide + A + H(+) = L-thyroxine + AH2. It catalyses the reaction 3,3'-diiodo-L-thyronine + iodide + A + H(+) = 3,3',5'-triiodo-L-thyronine + AH2. The enzyme catalyses 3'-iodo-L-thyronine + iodide + A + H(+) = 3',5'-diiodo-L-thyronine + AH2. The catalysed reaction is 3,3'-diiodothyronamine + iodide + A + H(+) = 3,3',5'-triiodothyronamine + AH2. It carries out the reaction 3'-iodothyronamine + iodide + A + H(+) = 3',5'-diiodothyronamine + AH2. Not inhibited by N(6)-propylthiouracil. Plays a crucial role in the metabolism of thyroid hormones (TH) and has specific roles in TH activation and inactivation by deiodination. Catalyzes the deiodination of L-thyroxine (T4) to 3,5,3'-triiodothyronine (T3) and 3',5'-diiodothyronine (3',5'-T2) to 3'-monoiodothyronine (3'-T1) via outer-ring deiodination (ORD). Catalyzes the deiodination of 3,3',5'-triiodothyronine (rT3) to 3,3'-diiodothyronine (3,3'-T2) via ORD. Catalyzes the phenolic ring deiodinations of 3,3',5'-triiodothyronamine and 3',5'- diiodothyronamine. The chain is Type II iodothyronine deiodinase (dio2) from Aquarana catesbeiana (American bullfrog).